A 541-amino-acid polypeptide reads, in one-letter code: Probable inorganic phosphate transporter 1-12 (541 aa).

Residues 1-26 (MGRQDQQLQVLNALDAAKTQWYHFTA) are Cytoplasmic-facing. A helical transmembrane segment spans residues 27–47 (IIVAGMGFFTDAYDLFCISLV). Residues 48–70 (TKLLGRIYYTDPASPTPGSLPPN) are Extracellular-facing. The chain crosses the membrane as a helical span at residues 71–91 (IAAAVNGVALCGTLSGQLFFG). The Cytoplasmic portion of the chain corresponds to 92 to 100 (WLGDKLGRK). The helical transmembrane segment at 101–121 (SVYGMTLLLMVICSIASGLSF) threads the bilayer. At 122-124 (SHT) the chain is on the extracellular side. Residues 125 to 145 (PTSVMATLCFFRFWLGFGIGG) form a helical membrane-spanning segment. At 146–163 (DYPLSATIMSEYANKKTR) the chain is on the cytoplasmic side. The helical transmembrane segment at 164-184 (GAFIAAVFAMQGFGILAGGVV) threads the bilayer. Over 185-213 (TLAMSAGFQAAFPAPAYEVNAAASTVPQA) the chain is Extracellular. The chain crosses the membrane as a helical span at residues 214–234 (DYVWRIILMLGALPAILTYYW). Over 235–297 (RMKMPETARY…ARFAKRHGAH (63 aa)) the chain is Cytoplasmic. A helical membrane pass occupies residues 298-318 (LLGTAATWFLVDVAYYSQNLF). Residues 319-349 (QKDIFTSIHWIPKARTMSELEEVFRISRAQT) are Extracellular-facing. Residues 350 to 370 (LIALCGTVPGYWFTVFLIDII) traverse the membrane as a helical segment. The Cytoplasmic portion of the chain corresponds to 371–374 (GRFK). A helical transmembrane segment spans residues 375–395 (IQLLGFAGMTAFMLGLAIPYH). Residues 396–403 (HWTMPGNQ) lie on the Extracellular side of the membrane. Residues 404–424 (VIFVFLYGFTFFFANFGPNAT) traverse the membrane as a helical segment. Topologically, residues 425 to 443 (TFIVPAEIFPARLRSTCHG) are cytoplasmic. The helical transmembrane segment at 444 to 464 (ISAASGKAGAIIGAFGFLYAA) threads the bilayer. Residues 465–484 (QPQDKAHVDAGYKPGIGVRN) are Extracellular-facing. Residues 485-505 (ALFVLAGCNLVGFLMTWMLVP) traverse the membrane as a helical segment. At 506 to 541 (ESKGKSLEEMSGEADDEEASANGGATAVNSSGVEMV) the chain is on the cytoplasmic side. The disordered stretch occupies residues 512-541 (LEEMSGEADDEEASANGGATAVNSSGVEMV). The span at 515-524 (MSGEADDEEA) shows a compositional bias: acidic residues. Polar residues predominate over residues 532–541 (AVNSSGVEMV).

Belongs to the major facilitator superfamily. Phosphate:H(+) symporter (TC 2.A.1.9) family.

The protein localises to the membrane. High-affinity transporter for external inorganic phosphate. This Oryza sativa subsp. japonica (Rice) protein is Probable inorganic phosphate transporter 1-12 (PHT1-12).